The following is a 307-amino-acid chain: tRNA pseudouridine synthase B (307 aa).

Asp38 serves as the catalytic Nucleophile.

Belongs to the pseudouridine synthase TruB family. Type 1 subfamily.

The catalysed reaction is uridine(55) in tRNA = pseudouridine(55) in tRNA. Functionally, responsible for synthesis of pseudouridine from uracil-55 in the psi GC loop of transfer RNAs. In Lachnoclostridium phytofermentans (strain ATCC 700394 / DSM 18823 / ISDg) (Clostridium phytofermentans), this protein is tRNA pseudouridine synthase B.